We begin with the raw amino-acid sequence, 222 residues long: Peptide methionine sulfoxide reductase MsrA (222 aa).

The active site involves Cys55.

The protein belongs to the MsrA Met sulfoxide reductase family.

The enzyme catalyses L-methionyl-[protein] + [thioredoxin]-disulfide + H2O = L-methionyl-(S)-S-oxide-[protein] + [thioredoxin]-dithiol. It catalyses the reaction [thioredoxin]-disulfide + L-methionine + H2O = L-methionine (S)-S-oxide + [thioredoxin]-dithiol. Functionally, has an important function as a repair enzyme for proteins that have been inactivated by oxidation. Catalyzes the reversible oxidation-reduction of methionine sulfoxide in proteins to methionine. This Streptomyces griseus subsp. griseus (strain JCM 4626 / CBS 651.72 / NBRC 13350 / KCC S-0626 / ISP 5235) protein is Peptide methionine sulfoxide reductase MsrA.